Reading from the N-terminus, the 90-residue chain is Small ribosomal subunit protein uS19 (90 aa).

This sequence belongs to the universal ribosomal protein uS19 family.

Its function is as follows. Protein S19 forms a complex with S13 that binds strongly to the 16S ribosomal RNA. This chain is Small ribosomal subunit protein uS19, found in Clostridium beijerinckii (strain ATCC 51743 / NCIMB 8052) (Clostridium acetobutylicum).